A 502-amino-acid chain; its full sequence is Glycerol kinase (502 aa).

T14 contacts ADP. ATP contacts are provided by T14, T15, and S16. T14 contacts sn-glycerol 3-phosphate. R18 serves as a coordination point for ADP. Residues R84, E85, and Y136 each contribute to the sn-glycerol 3-phosphate site. Residues R84, E85, and Y136 each coordinate glycerol. H232 is subject to Phosphohistidine; by HPr. Residue D246 coordinates sn-glycerol 3-phosphate. Residues D246 and Q247 each coordinate glycerol. T268 and G311 together coordinate ADP. ATP is bound by residues T268, G311, Q315, and G412. The ADP site is built by G412 and N416.

This sequence belongs to the FGGY kinase family. In terms of assembly, homotetramer and homodimer (in equilibrium). In terms of processing, the phosphoenolpyruvate-dependent sugar phosphotransferase system (PTS), including enzyme I, and histidine-containing protein (HPr) are required for the phosphorylation, which leads to the activation of the enzyme.

It catalyses the reaction glycerol + ATP = sn-glycerol 3-phosphate + ADP + H(+). It participates in polyol metabolism; glycerol degradation via glycerol kinase pathway; sn-glycerol 3-phosphate from glycerol: step 1/1. Activated by phosphorylation and inhibited by fructose 1,6-bisphosphate (FBP). Key enzyme in the regulation of glycerol uptake and metabolism. Catalyzes the phosphorylation of glycerol to yield sn-glycerol 3-phosphate. The protein is Glycerol kinase of Streptococcus pneumoniae serotype 2 (strain D39 / NCTC 7466).